A 441-amino-acid polypeptide reads, in one-letter code: ATP-dependent protease ATPase subunit HslU (441 aa).

ATP is bound by residues Ile-18, 60–65, Asp-254, Glu-319, and Arg-391; that span reads GVGKTE.

Belongs to the ClpX chaperone family. HslU subfamily. A double ring-shaped homohexamer of HslV is capped on each side by a ring-shaped HslU homohexamer. The assembly of the HslU/HslV complex is dependent on binding of ATP.

It is found in the cytoplasm. Its function is as follows. ATPase subunit of a proteasome-like degradation complex; this subunit has chaperone activity. The binding of ATP and its subsequent hydrolysis by HslU are essential for unfolding of protein substrates subsequently hydrolyzed by HslV. HslU recognizes the N-terminal part of its protein substrates and unfolds these before they are guided to HslV for hydrolysis. This is ATP-dependent protease ATPase subunit HslU from Actinobacillus succinogenes (strain ATCC 55618 / DSM 22257 / CCUG 43843 / 130Z).